Here is a 322-residue protein sequence, read N- to C-terminus: Epiphycan (322 aa).

The signal sequence occupies residues 1 to 19 (MGMLARVALGLIIIDAVLA). A disordered region spans residues 58-108 (KVSERLSGNRELLTPGPQLGDNQDEDKDEESTPRLIDGSSPQEPEFPGLLG). Residue Ser64 is glycosylated (O-linked (Xyl...) (dermatan sulfate) serine). Residue Ser96 is glycosylated (O-linked (GalNAc...) serine). The region spanning 106 to 143 (LLGPHTNEDFPTCLLCTCISTTVYCDDHELDAIPPLPK) is the LRRNT domain. A disulfide bridge links Cys118 with Cys130. LRR repeat units lie at residues 144–165 (KTTYFYSRFNRIKKINKNDFAS), 168–189 (DLKRIDLTSNLISEIDEDAFRK), 192–213 (HLQELVLRDNKIKQLPELPNTL), 238–258 (DLHHLYITDNSLDHIPLPLPE), and 259–280 (SLRALHLQNNDILEMHEDTFCN). An intrachain disulfide couples Cys279 to Cys312. Asn283 and Asn302 each carry an N-linked (GlcNAc...) asparagine glycan. The LRR 6 repeat unit spans residues 290-310 (ALEDIRLDGNPINLSRTPQAY).

Belongs to the small leucine-rich proteoglycan (SLRP) family. SLRP class III subfamily. Post-translationally, the O-linked polysaccharide on Ser-96 is probably the mucin type linked to GalNAc. There is one glycosaminoglycan chain, known to be dermatan sulfate, and it is probably the O-glycosylation at Ser-64. As to expression, confined to the middle zone of embryonic epiphyseal cartilage consisting of flattened chondrocytes and the ossifying region in the limb buds of chick embryos. Has also been detected in testis.

The protein resides in the secreted. Its subcellular location is the extracellular space. It localises to the extracellular matrix. In terms of biological role, may have a role in bone formation and also in establishing the ordered structure of cartilage through matrix organization. The polypeptide is Epiphycan (Epyc) (Mus musculus (Mouse)).